The following is a 366-amino-acid chain: Anhydro-N-acetylmuramic acid kinase (366 aa).

10-17 (GTSLDGVD) is a binding site for ATP.

It belongs to the anhydro-N-acetylmuramic acid kinase family.

The enzyme catalyses 1,6-anhydro-N-acetyl-beta-muramate + ATP + H2O = N-acetyl-D-muramate 6-phosphate + ADP + H(+). It functions in the pathway amino-sugar metabolism; 1,6-anhydro-N-acetylmuramate degradation. The protein operates within cell wall biogenesis; peptidoglycan recycling. Its function is as follows. Catalyzes the specific phosphorylation of 1,6-anhydro-N-acetylmuramic acid (anhMurNAc) with the simultaneous cleavage of the 1,6-anhydro ring, generating MurNAc-6-P. Is required for the utilization of anhMurNAc either imported from the medium or derived from its own cell wall murein, and thus plays a role in cell wall recycling. The protein is Anhydro-N-acetylmuramic acid kinase of Nitrobacter winogradskyi (strain ATCC 25391 / DSM 10237 / CIP 104748 / NCIMB 11846 / Nb-255).